A 485-amino-acid chain; its full sequence is NADH-quinone oxidoreductase subunit N (485 aa).

14 helical membrane passes run 8-28, 35-55, 75-95, 105-125, 127-147, 159-179, 203-223, 235-255, 271-291, 297-317, 326-346, 374-394, 408-427, and 455-475; these read LIAL…MLSI, FLNA…LWFV, LYTG…YPWL, FYLL…ANHL, SLFL…GYAF, YTIL…LVYA, LLAG…LVPF, PAPV…GVVM, VVLG…ALTQ, LLGY…IALK, VGVY…VVSL, AVMT…GFIG, WWLT…YYLR, and VVVL…QPLI.

The protein belongs to the complex I subunit 2 family. In terms of assembly, NDH-1 is composed of 13 different subunits. Subunits NuoA, H, J, K, L, M, N constitute the membrane sector of the complex.

The protein localises to the cell inner membrane. The catalysed reaction is a quinone + NADH + 5 H(+)(in) = a quinol + NAD(+) + 4 H(+)(out). NDH-1 shuttles electrons from NADH, via FMN and iron-sulfur (Fe-S) centers, to quinones in the respiratory chain. The immediate electron acceptor for the enzyme in this species is believed to be ubiquinone. Couples the redox reaction to proton translocation (for every two electrons transferred, four hydrogen ions are translocated across the cytoplasmic membrane), and thus conserves the redox energy in a proton gradient. In Cronobacter sakazakii (strain ATCC BAA-894) (Enterobacter sakazakii), this protein is NADH-quinone oxidoreductase subunit N.